Reading from the N-terminus, the 505-residue chain is MEKLQYELQGYLEIERYRKQRFLYPLLFREYIYALAHDHGLNSSIFYEPTENLGYDNDNKSSSLIVKRLITRLHQQNHLTISVNDSRFVGPNRSFYSQTIPEGFAGIMEIPFSMRLVSSLERLTKYQNFRSIHSIFSFLEDKLSHLYYVSDILIPHPIHLEILLQTLRTRIRDAPSLHLLRCFLHEHNNWNSLITLNKSISIFSKENQRLFLFLYNSHVYECESVLVFLRKQSSHLRSISSLAFLERTHFYGKIKHLVVTLRNDSQRTLPLWFFKEPLMHYVRYQGKSIMASRCTNLLMKKWKYYLVNFWQCHFHLWSQPGGIHINELSNHSFHFLGYLSGVRLTPWVIRSQMLEDSFMIDTAIKRFDTIVPIFPLIGSLVKAKFCNVSGYPISKSVWADSSDSDIIARFGWICTNLSHYHSGSSKKHSLCRIKNILRLSCARTLARKHKSTVRAICKRLGXKLLEEFFTEEHEIVSFIFRRTRLRSERIWYLDIIRINGLVPHS.

It belongs to the intron maturase 2 family. MatK subfamily.

It localises to the plastid. It is found in the chloroplast. Its function is as follows. Usually encoded in the trnK tRNA gene intron. Probably assists in splicing its own and other chloroplast group II introns. This chain is Maturase K, found in Barclaya longifolia (Orchid lily).